Reading from the N-terminus, the 328-residue chain is Malate dehydrogenase (328 aa).

11–17 (GAAGQIG) is a binding site for NAD(+). Residues R94 and R100 each coordinate substrate. Residues N107, Q114, and 131-133 (VGN) contribute to the NAD(+) site. The substrate site is built by N133 and R164. H189 functions as the Proton acceptor in the catalytic mechanism.

This sequence belongs to the LDH/MDH superfamily. MDH type 2 family.

The enzyme catalyses (S)-malate + NAD(+) = oxaloacetate + NADH + H(+). In terms of biological role, catalyzes the reversible oxidation of malate to oxaloacetate. This chain is Malate dehydrogenase, found in Acinetobacter baumannii (strain SDF).